The following is a 354-amino-acid chain: 3-dehydroquinate synthase (354 aa).

Residues 66-71 (DGERYK), 100-104 (GVVGD), 124-125 (TT), Lys137, and Lys146 each bind NAD(+). 3 residues coordinate Zn(2+): Glu179, His242, and His259.

It belongs to the sugar phosphate cyclases superfamily. Dehydroquinate synthase family. Co(2+) is required as a cofactor. Requires Zn(2+) as cofactor. The cofactor is NAD(+).

Its subcellular location is the cytoplasm. The enzyme catalyses 7-phospho-2-dehydro-3-deoxy-D-arabino-heptonate = 3-dehydroquinate + phosphate. Its pathway is metabolic intermediate biosynthesis; chorismate biosynthesis; chorismate from D-erythrose 4-phosphate and phosphoenolpyruvate: step 2/7. Functionally, catalyzes the conversion of 3-deoxy-D-arabino-heptulosonate 7-phosphate (DAHP) to dehydroquinate (DHQ). The sequence is that of 3-dehydroquinate synthase from Halorhodospira halophila (strain DSM 244 / SL1) (Ectothiorhodospira halophila (strain DSM 244 / SL1)).